The primary structure comprises 411 residues: Serine hydroxymethyltransferase (411 aa).

(6S)-5,6,7,8-tetrahydrofolate contacts are provided by residues Leu119 and 123-125; that span reads GHL. Lys228 is subject to N6-(pyridoxal phosphate)lysine. Residue 351–353 participates in (6S)-5,6,7,8-tetrahydrofolate binding; the sequence is SPF.

It belongs to the SHMT family. Homodimer. It depends on pyridoxal 5'-phosphate as a cofactor.

It is found in the cytoplasm. The enzyme catalyses (6R)-5,10-methylene-5,6,7,8-tetrahydrofolate + glycine + H2O = (6S)-5,6,7,8-tetrahydrofolate + L-serine. The protein operates within one-carbon metabolism; tetrahydrofolate interconversion. It functions in the pathway amino-acid biosynthesis; glycine biosynthesis; glycine from L-serine: step 1/1. Functionally, catalyzes the reversible interconversion of serine and glycine with tetrahydrofolate (THF) serving as the one-carbon carrier. This reaction serves as the major source of one-carbon groups required for the biosynthesis of purines, thymidylate, methionine, and other important biomolecules. Also exhibits THF-independent aldolase activity toward beta-hydroxyamino acids, producing glycine and aldehydes, via a retro-aldol mechanism. The sequence is that of Serine hydroxymethyltransferase from Clostridium botulinum (strain Alaska E43 / Type E3).